The sequence spans 100 residues: Small ribosomal subunit protein uS14 (100 aa).

This sequence belongs to the universal ribosomal protein uS14 family. Part of the 30S ribosomal subunit. Contacts proteins S3 and S10.

Its function is as follows. Binds 16S rRNA, required for the assembly of 30S particles and may also be responsible for determining the conformation of the 16S rRNA at the A site. The polypeptide is Small ribosomal subunit protein uS14 (Trichormus variabilis (strain ATCC 29413 / PCC 7937) (Anabaena variabilis)).